Consider the following 168-residue polypeptide: ATP synthase subunit b, chloroplastic (168 aa).

A helical transmembrane segment spans residues 20-37; that stretch reads LNLAVVLPIVFTLGRDTL.

It belongs to the ATPase B chain family. F-type ATPases have 2 components, F(1) - the catalytic core - and F(0) - the membrane proton channel. F(1) has five subunits: alpha(3), beta(3), gamma(1), delta(1), epsilon(1). F(0) has four main subunits: a(1), b(1), b'(1) and c(10-14). The alpha and beta chains form an alternating ring which encloses part of the gamma chain. F(1) is attached to F(0) by a central stalk formed by the gamma and epsilon chains, while a peripheral stalk is formed by the delta, b and b' chains.

The protein localises to the plastid. The protein resides in the chloroplast thylakoid membrane. F(1)F(0) ATP synthase produces ATP from ADP in the presence of a proton or sodium gradient. F-type ATPases consist of two structural domains, F(1) containing the extramembraneous catalytic core and F(0) containing the membrane proton channel, linked together by a central stalk and a peripheral stalk. During catalysis, ATP synthesis in the catalytic domain of F(1) is coupled via a rotary mechanism of the central stalk subunits to proton translocation. Functionally, component of the F(0) channel, it forms part of the peripheral stalk, linking F(1) to F(0). This Ostreococcus tauri protein is ATP synthase subunit b, chloroplastic.